The primary structure comprises 456 residues: Arginine biosynthesis bifunctional protein ArgJ, mitochondrial (456 aa).

Substrate contacts are provided by Thr-184, Lys-213, Thr-224, Glu-311, Asn-451, and Thr-456. Thr-224 acts as the Nucleophile in catalysis.

It belongs to the ArgJ family. As to quaternary structure, heterodimer of an alpha and a beta chain. Post-translationally, the alpha and beta chains are autoproteolytically processed from a single precursor protein within the mitochondrion.

The protein localises to the mitochondrion matrix. It catalyses the reaction N(2)-acetyl-L-ornithine + L-glutamate = N-acetyl-L-glutamate + L-ornithine. It carries out the reaction L-glutamate + acetyl-CoA = N-acetyl-L-glutamate + CoA + H(+). It participates in amino-acid biosynthesis; L-arginine biosynthesis; L-ornithine and N-acetyl-L-glutamate from L-glutamate and N(2)-acetyl-L-ornithine (cyclic): step 1/1. It functions in the pathway amino-acid biosynthesis; L-arginine biosynthesis; N(2)-acetyl-L-ornithine from L-glutamate: step 1/4. Its function is as follows. Catalyzes two activities which are involved in the cyclic version of arginine biosynthesis: the synthesis of acetylglutamate from glutamate and acetyl-CoA, and of ornithine by transacetylation between acetylornithine and glutamate. This chain is Arginine biosynthesis bifunctional protein ArgJ, mitochondrial, found in Aspergillus niger (strain ATCC MYA-4892 / CBS 513.88 / FGSC A1513).